Here is a 233-residue protein sequence, read N- to C-terminus: Small heat shock protein hspF (233 aa).

The sHSP domain occupies 129-233 (IPLFTFFEPL…ILLITVNKFL (105 aa)).

Belongs to the small heat shock protein (HSP20) family.

In Dictyostelium discoideum (Social amoeba), this protein is Small heat shock protein hspF (hspF-1).